Consider the following 494-residue polypeptide: tRNA-2-methylthio-N(6)-dimethylallyladenosine synthase (494 aa).

Positions Arg4–His120 constitute an MTTase N-terminal domain. Cys13, Cys49, Cys83, Cys157, Cys161, and Cys164 together coordinate [4Fe-4S] cluster. The 232-residue stretch at Arg143–Glu374 folds into the Radical SAM core domain. Residues Arg376–Leu449 enclose the TRAM domain. Positions Arg465–Arg494 are disordered.

The protein belongs to the methylthiotransferase family. MiaB subfamily. In terms of assembly, monomer. It depends on [4Fe-4S] cluster as a cofactor.

Its subcellular location is the cytoplasm. The enzyme catalyses N(6)-dimethylallyladenosine(37) in tRNA + (sulfur carrier)-SH + AH2 + 2 S-adenosyl-L-methionine = 2-methylsulfanyl-N(6)-dimethylallyladenosine(37) in tRNA + (sulfur carrier)-H + 5'-deoxyadenosine + L-methionine + A + S-adenosyl-L-homocysteine + 2 H(+). Catalyzes the methylthiolation of N6-(dimethylallyl)adenosine (i(6)A), leading to the formation of 2-methylthio-N6-(dimethylallyl)adenosine (ms(2)i(6)A) at position 37 in tRNAs that read codons beginning with uridine. This is tRNA-2-methylthio-N(6)-dimethylallyladenosine synthase from Parafrankia sp. (strain EAN1pec).